The sequence spans 229 residues: Prolactin (229 aa).

A signal peptide spans 1 to 30 (MDNKGWSLKGSLLPLLLLVSDLLLCQGVTS). An intrachain disulfide couples cysteine 34 to cysteine 41. 3 positions are modified to phosphoserine: serine 56, serine 64, and serine 120. Disulfide bonds link cysteine 88–cysteine 204 and cysteine 221–cysteine 229.

The protein belongs to the somatotropin/prolactin family. In terms of assembly, interacts with PRLR.

The protein resides in the secreted. In terms of biological role, prolactin acts primarily on the mammary gland by promoting lactation. The chain is Prolactin (PRL) from Neovison vison (American mink).